Reading from the N-terminus, the 123-residue chain is Large ribosomal subunit protein bL20 (123 aa).

Over residues 1-15 the composition is skewed to basic residues; that stretch reads MARVKRSVNAKKKRR. The segment at 1–23 is disordered; sequence MARVKRSVNAKKKRREVLDQASG.

Belongs to the bacterial ribosomal protein bL20 family.

Its function is as follows. Binds directly to 23S ribosomal RNA and is necessary for the in vitro assembly process of the 50S ribosomal subunit. It is not involved in the protein synthesizing functions of that subunit. This Cutibacterium acnes (strain DSM 16379 / KPA171202) (Propionibacterium acnes) protein is Large ribosomal subunit protein bL20.